The following is a 196-amino-acid chain: Large ribosomal subunit protein uL6 (196 aa).

It belongs to the universal ribosomal protein uL6 family. In terms of assembly, part of the 50S ribosomal subunit.

This protein binds to the 23S rRNA, and is important in its secondary structure. It is located near the subunit interface in the base of the L7/L12 stalk, and near the tRNA binding site of the peptidyltransferase center. The protein is Large ribosomal subunit protein uL6 of Archaeoglobus fulgidus (strain ATCC 49558 / DSM 4304 / JCM 9628 / NBRC 100126 / VC-16).